A 549-amino-acid polypeptide reads, in one-letter code: Vacuolar fusion protein MON1 homolog A (549 aa).

Disordered stretches follow at residues 1–90 (MAAD…EQIS) and 109–137 (EEMR…GKEE). Basic and acidic residues predominate over residues 110–119 (EMRQSQEGKL).

The protein belongs to the MON1/SAND family.

In terms of biological role, plays an important role in membrane trafficking through the secretory apparatus. Not involved in endocytic trafficking to lysosomes. The chain is Vacuolar fusion protein MON1 homolog A (MON1A) from Gallus gallus (Chicken).